The primary structure comprises 273 residues: Tetraspanin-8 (273 aa).

Over 1–7 the chain is Cytoplasmic; that stretch reads MARCSNN. A helical membrane pass occupies residues 8–28; the sequence is LVGILNFLVFLLSIPILAGGI. The Extracellular portion of the chain corresponds to 29–45; it reads WLSQKGSTECERFLDKP. A helical transmembrane segment spans residues 46–66; the sequence is VIALGVFLMVVAIAGLIGSCC. Residues 67-75 are Cytoplasmic-facing; sequence RVTWLLWVY. The chain crosses the membrane as a helical span at residues 76-96; that stretch reads LFVMFLLILLVFCITVFAFVV. The Extracellular portion of the chain corresponds to 97 to 235; sequence TNKGAGEAIE…NVKSAWKKVA (139 aa). The N-linked (GlcNAc...) asparagine glycan is linked to N192. Residues 236–256 form a helical membrane-spanning segment; the sequence is IVNIVFLVFLIIVYSVGCCAF. Topologically, residues 257 to 273 are cytoplasmic; it reads RNNKRDDSYSRTYGYKP.

This sequence belongs to the tetraspanin (TM4SF) family.

The protein resides in the membrane. May be involved in the regulation of cell differentiation. The sequence is that of Tetraspanin-8 (TET8) from Arabidopsis thaliana (Mouse-ear cress).